Consider the following 396-residue polypeptide: Phosphoglycerate kinase (396 aa).

Substrate-binding positions include 21–23, Arg-36, 59–62, Arg-118, and Arg-151; these read DFN and HLGR. Residues Lys-201, Gly-292, Glu-323, and 349 to 352 contribute to the ATP site; that span reads GGDS.

This sequence belongs to the phosphoglycerate kinase family. As to quaternary structure, monomer.

It localises to the cytoplasm. The enzyme catalyses (2R)-3-phosphoglycerate + ATP = (2R)-3-phospho-glyceroyl phosphate + ADP. It functions in the pathway carbohydrate degradation; glycolysis; pyruvate from D-glyceraldehyde 3-phosphate: step 2/5. This chain is Phosphoglycerate kinase, found in Leptospira biflexa serovar Patoc (strain Patoc 1 / Ames).